Consider the following 90-residue polypeptide: MQRIIFCEYEQRDTEGLDFVPYPGELGQKIFACIGKVGWAAWLVHQTMLINENRLSPRNPSHRAFLEEELNKFLFERRVAKPEGYIEPDA.

Belongs to the Fe(2+)-trafficking protein family.

In terms of biological role, could be a mediator in iron transactions between iron acquisition and iron-requiring processes, such as synthesis and/or repair of Fe-S clusters in biosynthetic enzymes. The polypeptide is Probable Fe(2+)-trafficking protein (Xylella fastidiosa (strain 9a5c)).